Consider the following 623-residue polypeptide: Chaperone protein DnaK (623 aa).

At Thr-197 the chain carries Phosphothreonine; by autocatalysis. A disordered region spans residues 600–623 (KKDENAGANGGNKKDDDVIDAEVE).

Belongs to the heat shock protein 70 family.

Its function is as follows. Acts as a chaperone. This is Chaperone protein DnaK from Campylobacter concisus (strain 13826).